The chain runs to 438 residues: V-type ATP synthase beta chain (438 aa).

It belongs to the ATPase alpha/beta chains family.

Its function is as follows. Produces ATP from ADP in the presence of a proton gradient across the membrane. The V-type beta chain is a regulatory subunit. The polypeptide is V-type ATP synthase beta chain (Chlamydia trachomatis serovar L2b (strain UCH-1/proctitis)).